The chain runs to 2556 residues: Non-reducing polyketide synthase tazA (2556 aa).

An N-terminal acylcarrier protein transacylase domain (SAT) region spans residues 16-270 (LFGPQALSFT…QAIGLRGRFH (255 aa)). The Nucleophile; for transacylase activity role is filled by C143. Residue H270 is the Proton donor/acceptor; for transacylase activity of the active site. Residues 397–769 (EDEIAVIGMA…GSNASMIVTQ (373 aa)) enclose the Ketosynthase family 3 (KS3) domain. Residues 876 to 1209 (CFGGQISRFV…WAHHCTQAPA (334 aa)) are malonyl-CoA:ACP transacylase (MAT) domain. Residues 1254-1383 (YTFVGYQDEG…GQIIFQSAAE (130 aa)) form an N-terminal hotdog fold region. A PKS/mFAS DH domain is found at 1254–1560 (YTFVGYQDEG…YSRLPKSTMS (307 aa)). The segment at 1257 to 1564 (VGYQDEGKRQ…PKSTMSKMLT (308 aa)) is product template (PT) domain. The active-site Proton acceptor; for dehydratase activity is the H1285. The interval 1408–1560 (DPDDVLQGRN…YSRLPKSTMS (153 aa)) is C-terminal hotdog fold. D1465 acts as the Proton donor; for dehydratase activity in catalysis. The disordered stretch occupies residues 1567–1621 (TAPSERRAQVDSPSMPASINAPPSASEQAPVEPAPQTKESAPIAEPGAGGQSNSK). Residues 1577 to 1593 (DSPSMPASINAPPSASE) are compositionally biased toward polar residues. A Carrier domain is found at 1620–1694 (SKVPGIVVEV…DVVQCVHKTL (75 aa)). Residue S1654 is modified to O-(pantetheine 4'-phosphoryl)serine. Residues 1700–1731 (SAAQESEGNLTPASSGTQSPRSDPVSDTSLSD) form a disordered region. The segment covering 1702–1731 (AQESEGNLTPASSGTQSPRSDPVSDTSLSD) has biased composition (polar residues). Residues 1830-2107 (LEHEGRLIDI…DWTDGHLAEN (278 aa)) are methyltransferase domain. The tract at residues 2180 to 2424 (VTGATGSLGA…WTPVDVVAST (245 aa)) is NADPH-binding (R) domain.

It depends on pantetheine 4'-phosphate as a cofactor.

It participates in secondary metabolite biosynthesis. Non-reducing polyketide synthase; part of the gene cluster that mediates the biosynthesis of azaterrilone A and other azaphilones, a class of fungal metabolites characterized by a highly oxygenated pyrano-quinone bicyclic core and exhibiting a broad range of bioactivities. The first step of the pathway begins with tazA that assembles one acetyl-CoA starter unit, five malonyl-CoA units, and catalyzes a series of Claisen condensations, methylation, PT-mediated cyclization, and finally releases the first hexaketide precursor through the R-domain. The tazA product then undergoes reduction on its terminal ketone and the following pyran-ring formation by yet undetermined enzyme(s). Dehydration and enoyl reduction, possibly involving the trans-enoyl reductase tazE leads to the next intermediate. TazD is predicted as an acetyltransferase and might catalyze the acetylation steps leading to the synthesis of azaterrilone A. Azaterrilone A is not the final product of the taz pathway and both the highly reducing polyketide synthase tazB and the dual enzyme tazHJ catalyze late steps of the pathway, leading to the production of the 2 final stereoisomers that contain additional polyketide modification whose structures have still to be determined. This is Non-reducing polyketide synthase tazA from Aspergillus terreus (strain NIH 2624 / FGSC A1156).